Reading from the N-terminus, the 283-residue chain is GTP cyclohydrolase MptA (283 aa).

This sequence belongs to the GTP cyclohydrolase IV family. As to quaternary structure, homodimer. Requires Fe(2+) as cofactor.

It catalyses the reaction GTP + H2O = 7,8-dihydroneopterin 2',3'-cyclic phosphate + formate + diphosphate + H(+). It functions in the pathway cofactor biosynthesis; 5,6,7,8-tetrahydromethanopterin biosynthesis. Its function is as follows. Converts GTP to 7,8-dihydro-D-neopterin 2',3'-cyclic phosphate, the first intermediate in the biosynthesis of coenzyme methanopterin. This Aeropyrum pernix (strain ATCC 700893 / DSM 11879 / JCM 9820 / NBRC 100138 / K1) protein is GTP cyclohydrolase MptA.